We begin with the raw amino-acid sequence, 389 residues long: Ethanolamine-phosphate cytidylyltransferase (389 aa).

The tract at residues 1–20 (MIRNGRGAAGGAEQPGPGGR) is disordered. CTP-binding positions include 221 to 222 (AF), 229 to 232 (HVDF), K259, 307 to 310 (HGKT), and 336 to 340 (SGSNL). At S338 the chain carries Phosphoserine. T341 and T342 each carry phosphothreonine.

The protein belongs to the cytidylyltransferase family. As to expression, strongest expression in liver, heart, and skeletal muscle.

It catalyses the reaction phosphoethanolamine + CTP + H(+) = CDP-ethanolamine + diphosphate. It participates in phospholipid metabolism; phosphatidylethanolamine biosynthesis; phosphatidylethanolamine from ethanolamine: step 2/3. In terms of biological role, ethanolamine-phosphate cytidylyltransferase that catalyzes the second step in the synthesis of phosphatidylethanolamine (PE) from ethanolamine via the CDP-ethanolamine pathway. Phosphatidylethanolamine is a dominant inner-leaflet phospholipid in cell membranes, where it plays a role in membrane function by structurally stabilizing membrane-anchored proteins, and participates in important cellular processes such as cell division, cell fusion, blood coagulation, and apoptosis. This chain is Ethanolamine-phosphate cytidylyltransferase (PCYT2), found in Homo sapiens (Human).